Reading from the N-terminus, the 133-residue chain is MQSVSQVVKTSLPNYLSSLPVPDTFGGWFKLSFKDWLALIPPTAVVVGIGYVTYRAFYPKAHRTCKSGSGLCNENVRKHEAKVVDMIDIENIADKAAFCRCWKTKNWPYCDGSHAAHNKDTGDNVGPIVIKKK.

Residues 1-35 (MQSVSQVVKTSLPNYLSSLPVPDTFGGWFKLSFKD) are Lumenal-facing. A helical membrane pass occupies residues 36 to 58 (WLALIPPTAVVVGIGYVTYRAFY). Residues 59–133 (PKAHRTCKSG…NVGPIVIKKK (75 aa)) are Cytoplasmic-facing. The [2Fe-2S] cluster site is built by Cys-99, Cys-101, Cys-110, and His-114.

Belongs to the CISD protein family. CISD2 subfamily. Requires [2Fe-2S] cluster as cofactor.

Its subcellular location is the endoplasmic reticulum membrane. The sequence is that of CDGSH iron-sulfur domain-containing protein 2 homolog from Drosophila virilis (Fruit fly).